Consider the following 532-residue polypeptide: Bifunctional purine biosynthesis protein PurH (532 aa).

An MGS-like domain is found at 1-148 (MQTPKPIKRA…KNHKDVTIVV (148 aa)).

It belongs to the PurH family.

The enzyme catalyses (6R)-10-formyltetrahydrofolate + 5-amino-1-(5-phospho-beta-D-ribosyl)imidazole-4-carboxamide = 5-formamido-1-(5-phospho-D-ribosyl)imidazole-4-carboxamide + (6S)-5,6,7,8-tetrahydrofolate. The catalysed reaction is IMP + H2O = 5-formamido-1-(5-phospho-D-ribosyl)imidazole-4-carboxamide. It functions in the pathway purine metabolism; IMP biosynthesis via de novo pathway; 5-formamido-1-(5-phospho-D-ribosyl)imidazole-4-carboxamide from 5-amino-1-(5-phospho-D-ribosyl)imidazole-4-carboxamide (10-formyl THF route): step 1/1. The protein operates within purine metabolism; IMP biosynthesis via de novo pathway; IMP from 5-formamido-1-(5-phospho-D-ribosyl)imidazole-4-carboxamide: step 1/1. The chain is Bifunctional purine biosynthesis protein PurH from Alteromonas mediterranea (strain DSM 17117 / CIP 110805 / LMG 28347 / Deep ecotype).